The chain runs to 64 residues: MAGGHVAHLVYKGPSVVKELVIGFSLGLVAGGFWKMHHWNSQRRTKEFYDMLEKGQISVVADEE.

Residues 16–34 (VVKELVIGFSLGLVAGGFW) form a helical membrane-spanning segment.

The protein belongs to the cytochrome c oxidase subunit 5C family. In terms of assembly, sweet potato cytochrome C oxidase consists of at least seven different polypeptides species, subunits I, II, III, IV, Va, Vb, and Vc in order of MW.

It is found in the mitochondrion inner membrane. This protein is one of the nuclear-coded polypeptide chains of cytochrome c oxidase, the terminal oxidase in mitochondrial electron transport. The protein is Cytochrome c oxidase subunit 5C (COX5C) of Ipomoea batatas (Sweet potato).